An 80-amino-acid chain; its full sequence is U6-ctenitoxin-Pn1a (80 aa).

A signal peptide spans 1-21; the sequence is MWLKIQVFVLALALITLGIQA. The propeptide occupies 22–37; it reads EPNSGPNNPLIQEEAR. Cystine bridges form between cysteine 39–cysteine 54, cysteine 46–cysteine 59, cysteine 53–cysteine 69, and cysteine 61–cysteine 67. A propeptide spanning residues 72–80 is cleaved from the precursor; it reads TLGDLFGRR.

The protein belongs to the neurotoxin 02 (plectoxin) family. 01 (Tx3) subfamily. As to expression, expressed by the venom gland.

The protein resides in the secreted. In terms of biological role, antagonist of L-type calcium channels (Cav1/CACNA1). In Phoneutria nigriventer (Brazilian armed spider), this protein is U6-ctenitoxin-Pn1a.